A 448-amino-acid polypeptide reads, in one-letter code: tRNA-2-methylthio-N(6)-dimethylallyladenosine synthase (448 aa).

The MTTase N-terminal domain occupies 2-119 (KKLYIKTFGC…LSDLIAKRRE (118 aa)). The [4Fe-4S] cluster site is built by Cys-11, Cys-48, Cys-82, Cys-156, Cys-160, and Cys-163. One can recognise a Radical SAM core domain in the interval 142-377 (RQTRGSAYVS…LVESQANQIS (236 aa)). Positions 378 to 444 (QKMLGNIERV…NYTLRGKLVE (67 aa)) constitute a TRAM domain.

Belongs to the methylthiotransferase family. MiaB subfamily. As to quaternary structure, monomer. [4Fe-4S] cluster serves as cofactor.

Its subcellular location is the cytoplasm. It catalyses the reaction N(6)-dimethylallyladenosine(37) in tRNA + (sulfur carrier)-SH + AH2 + 2 S-adenosyl-L-methionine = 2-methylsulfanyl-N(6)-dimethylallyladenosine(37) in tRNA + (sulfur carrier)-H + 5'-deoxyadenosine + L-methionine + A + S-adenosyl-L-homocysteine + 2 H(+). Functionally, catalyzes the methylthiolation of N6-(dimethylallyl)adenosine (i(6)A), leading to the formation of 2-methylthio-N6-(dimethylallyl)adenosine (ms(2)i(6)A) at position 37 in tRNAs that read codons beginning with uridine. This chain is tRNA-2-methylthio-N(6)-dimethylallyladenosine synthase, found in Polynucleobacter necessarius subsp. necessarius (strain STIR1).